A 372-amino-acid chain; its full sequence is DNA replication and repair protein RecF (372 aa).

Residue 30-37 (GDNGQGKT) coordinates ATP.

It belongs to the RecF family.

The protein resides in the cytoplasm. The RecF protein is involved in DNA metabolism; it is required for DNA replication and normal SOS inducibility. RecF binds preferentially to single-stranded, linear DNA. It also seems to bind ATP. The chain is DNA replication and repair protein RecF from Ruminiclostridium cellulolyticum (strain ATCC 35319 / DSM 5812 / JCM 6584 / H10) (Clostridium cellulolyticum).